Consider the following 92-residue polypeptide: Cell wall protein CWP2 (92 aa).

Residues M1 to A20 form the signal peptide. The stretch at A24–T37 is one PIR1/2/3 repeat. A disordered region spans residues T41–S60. N71 carries the GPI-anchor amidated asparagine lipid modification. A propeptide spans G72 to L92 (removed in mature form).

It belongs to the SRP1/TIP1 family. In terms of processing, extensively O-glycosylated. The GPI-anchor is attached to the protein in the endoplasmic reticulum and serves to target the protein to the cell surface. There, the glucosamine-inositol phospholipid moiety is cleaved off and the GPI-modified mannoprotein is covalently attached via its lipidless GPI glycan remnant to the 1,6-beta-glucan of the outer cell wall layer. Post-translationally, covalently linked to beta-1,3-glucan of the inner cell wall layer via an alkali-sensitive ester linkage between the gamma-carboxyl group of glutamic acids, arising from a specific glutamine within the PIR1/2/3 repeat, and hydroxyl groups of glucoses of beta-1,3-glucan chains.

It is found in the secreted. The protein resides in the cell wall. The protein localises to the membrane. Functionally, component of the cell wall. This is Cell wall protein CWP2 (CWP2) from Saccharomyces cerevisiae (strain ATCC 204508 / S288c) (Baker's yeast).